A 734-amino-acid polypeptide reads, in one-letter code: Ribosomal biogenesis protein LAS1L (734 aa).

The disordered stretch occupies residues 204–255 (EGIEEEDQEEDKNIVVDDITEQKPEPQDDGKSTESDVKADGDSKGSEEVDSH). Residues 214–255 (DKNIVVDDITEQKPEPQDDGKSTESDVKADGDSKGSEEVDSH) are compositionally biased toward basic and acidic residues. Residues Lys-215 and Lys-226 each participate in a glycyl lysine isopeptide (Lys-Gly) (interchain with G-Cter in SUMO2) cross-link. Phosphoserine is present on residues Ser-441, Ser-523, and Ser-560. The span at 547–561 (GSEAKAQQQEEQGSV) shows a compositional bias: polar residues. A disordered region spans residues 547–619 (GSEAKAQQQE…PFSTGQESPT (73 aa)). The span at 563–575 (DVKEEEKEEKEVL) shows a compositional bias: basic and acidic residues. Residues 578–605 (QVEEEEENDDQEEEEEDEDDEDDEEEDR) are compositionally biased toward acidic residues. Position 617 is a phosphoserine (Ser-617). The segment at 636-655 (SAWQVSSEDVRWDTFPLGRM) is interaction with NOL9.

It belongs to the LAS1 family. Component of some MLL1/MLL complex, at least composed of the core components KMT2A/MLL1, ASH2L, HCFC1/HCF1, WDR5 and RBBP5, as well as the facultative components BACC1, CHD8, E2F6, HSP70, INO80C, KANSL1, LAS1L, MAX, MCRS1, MGA, KAT8/MOF, PELP1, PHF20, PRP31, RING2, RUVB1/TIP49A, RUVB2/TIP49B, SENP3, TAF1, TAF4, TAF6, TAF7, TAF9 and TEX10. Component of the 5FMC complex, at least composed of PELP1, LAS1L, TEX10, WDR18 and SENP3; the complex interacts with methylated CHTOP and ZNF148. Interacts with NOL9 to form an ITS2 pre-rRNA endonuclease-kinase complex.

The protein localises to the nucleus. The protein resides in the nucleolus. Its subcellular location is the nucleoplasm. It is found in the cytoplasm. Functionally, required for the synthesis of the 60S ribosomal subunit and maturation of the 28S rRNA. Functions as a component of the Five Friends of Methylated CHTOP (5FMC) complex; the 5FMC complex is recruited to ZNF148 by methylated CHTOP, leading to desumoylation of ZNF148 and subsequent transactivation of ZNF148 target genes. Required for the efficient pre-rRNA processing at both ends of internal transcribed spacer 2 (ITS2). This Homo sapiens (Human) protein is Ribosomal biogenesis protein LAS1L (LAS1L).